Reading from the N-terminus, the 165-residue chain is Xanthine-guanine phosphoribosyltransferase (165 aa).

Residues 41–42 (RG) and 98–106 (DDLTDTGKT) each bind 5-phospho-alpha-D-ribose 1-diphosphate. Residue Asp99 coordinates Mg(2+). Guanine contacts are provided by Asp102 and Ile145. The xanthine site is built by Asp102 and Ile145. Residues 102 to 106 (DTGKT) and 144 to 145 (WI) each bind GMP.

Belongs to the purine/pyrimidine phosphoribosyltransferase family. XGPT subfamily. In terms of assembly, homotetramer. Mg(2+) is required as a cofactor.

The protein resides in the cell inner membrane. It catalyses the reaction GMP + diphosphate = guanine + 5-phospho-alpha-D-ribose 1-diphosphate. The enzyme catalyses XMP + diphosphate = xanthine + 5-phospho-alpha-D-ribose 1-diphosphate. The catalysed reaction is IMP + diphosphate = hypoxanthine + 5-phospho-alpha-D-ribose 1-diphosphate. It functions in the pathway purine metabolism; GMP biosynthesis via salvage pathway; GMP from guanine: step 1/1. It participates in purine metabolism; XMP biosynthesis via salvage pathway; XMP from xanthine: step 1/1. In terms of biological role, purine salvage pathway enzyme that catalyzes the transfer of the ribosyl-5-phosphate group from 5-phospho-alpha-D-ribose 1-diphosphate (PRPP) to the N9 position of the 6-oxopurines guanine and xanthine to form the corresponding ribonucleotides GMP (guanosine 5'-monophosphate) and XMP (xanthosine 5'-monophosphate), with the release of PPi. To a lesser extent, also acts on hypoxanthine. The protein is Xanthine-guanine phosphoribosyltransferase of Agrobacterium fabrum (strain C58 / ATCC 33970) (Agrobacterium tumefaciens (strain C58)).